A 708-amino-acid polypeptide reads, in one-letter code: Polyribonucleotide nucleotidyltransferase (708 aa).

Mg(2+)-binding residues include Asp-486 and Asp-492. The KH domain occupies Pro-553–Ile-612. Residues Gly-622–Lys-690 form the S1 motif domain.

Belongs to the polyribonucleotide nucleotidyltransferase family. Mg(2+) is required as a cofactor.

Its subcellular location is the cytoplasm. The enzyme catalyses RNA(n+1) + phosphate = RNA(n) + a ribonucleoside 5'-diphosphate. Its function is as follows. Involved in mRNA degradation. Catalyzes the phosphorolysis of single-stranded polyribonucleotides processively in the 3'- to 5'-direction. The protein is Polyribonucleotide nucleotidyltransferase of Nitrosomonas europaea (strain ATCC 19718 / CIP 103999 / KCTC 2705 / NBRC 14298).